A 697-amino-acid chain; its full sequence is Protein Niban 3 (697 aa).

Positions methionine 1 to leucine 48 are disordered.

It belongs to the Niban family. Specifically expressed in B-lymphocytes.

This is Protein Niban 3 from Homo sapiens (Human).